A 267-amino-acid chain; its full sequence is Short-chain dehydrogenase/reductase GME11361 (267 aa).

Residues I10, T36, K42, D57, N80, Y129, K133, V162, and S164 each contribute to the NADP(+) site. The active-site Proton acceptor is the Y129. K133 acts as the Lowers pKa of active site Tyr in catalysis.

It belongs to the short-chain dehydrogenases/reductases (SDR) family.

It participates in secondary metabolite biosynthesis. In terms of biological role, short-chain dehydrogenase/reductase; part of the gene cluster that mediates the biosynthesis of dibenzodioxocinones such as pestalotiollide B, a novel class of inhibitors against cholesterol ester transfer protein (CEPT). The biosynthesis initiates from condensation of acetate and malonate units catalyzed by the non-reducing PKS pks8/GME11356. Pks8/GME11356 lacks a thioesterase (TE) domain, which is important to the cyclizing of the third ring of atrochrysone carboxylic acid, and the esterase GME11355 might play the role of TE and catalyzes the cyclization reaction of the C ring. The lactamase-like protein GME11357 (or other beta-lactamases in Pestalotiopsis microspora) probably hydrolyzes the thioester bond between the ACP of pks8/GME11356 and the intermediate to release atrochrysone carboxylic acid, which is spontaneously dehydrates to form endocrocin anthrone. Endocrocin anthrone is further converted to emodin via the endocrocin intermediate. Emodin is then oxidized by several enzymes such as the Baeyer-Villiger oxidase GME11358, the oxidoreductase GME11367, the short chain dehydrogenase/reductase GME11373, as well as by other oxidoreductases from the cluster, to modify the A and C rings and open the B ring, and finally yield monodictyphenone. The prenyltransferase GME11375 may catalyze the addition reaction between the C5 side chains and the carbon bone of dibenzodioxocinones. The remaining biochemical reactions to the final product dibenzodioxocinones should be methylation catalyzed by methyltransferase GME11366 and reduction and lactonization reaction catalyzed by a series of oxidordeuctases. The polypeptide is Short-chain dehydrogenase/reductase GME11361 (Pestalotiopsis microspora).